A 504-amino-acid polypeptide reads, in one-letter code: Galactan beta-1,4-galactosyltransferase GALS3 (504 aa).

A helical transmembrane segment spans residues 30-50; it reads LTFMALLVLCTLATLLPFIPS. The region spanning 242–456 is the GT92 domain; it reads DYLYCGSSLY…YHGSISQRRE (215 aa).

This sequence belongs to the glycosyltransferase 92 family. Expressed in root caps, mature leaves, top of the stems and seeds.

Its subcellular location is the golgi apparatus membrane. Its function is as follows. Involved in the biosynthesis of beta-1,4-galactan. Beta-1,4-galactans are abundant polysaccharides in plant cell walls and are found as side-chain of rhamnogalacturonan I, which is a major component of pectin. The sequence is that of Galactan beta-1,4-galactosyltransferase GALS3 from Arabidopsis thaliana (Mouse-ear cress).